A 173-amino-acid chain; its full sequence is Placenta-specific protein 1 (173 aa).

The first 23 residues, 1–23, serve as a signal peptide directing secretion; the sequence is MNLRKFLGGTVLVAFMLFSYSEQ.

This sequence belongs to the PLAC1 family. In terms of tissue distribution, expressed in placenta.

Its subcellular location is the secreted. Its function is as follows. May play a role in placental development. This is Placenta-specific protein 1 from Mus musculus (Mouse).